Here is a 297-residue protein sequence, read N- to C-terminus: tRNA pseudouridine synthase B (297 aa).

D44 serves as the catalytic Nucleophile.

This sequence belongs to the pseudouridine synthase TruB family. Type 1 subfamily.

The enzyme catalyses uridine(55) in tRNA = pseudouridine(55) in tRNA. In terms of biological role, responsible for synthesis of pseudouridine from uracil-55 in the psi GC loop of transfer RNAs. The polypeptide is tRNA pseudouridine synthase B (Mycobacterium sp. (strain JLS)).